Consider the following 100-residue polypeptide: MIPLQHGLILAAILFVLGLTGLIIRRNLLFMLIGLEVMINAAALAFVVVGSYWGQPDGQVMFILAISLAAAEASIGLALLLQLYRRRQNLNIDTVSEMRG.

The next 3 membrane-spanning stretches (helical) occupy residues 4 to 24 (LQHG…GLII), 29 to 49 (LFML…FVVV), and 60 to 80 (VMFI…LALL).

This sequence belongs to the complex I subunit 4L family. As to quaternary structure, NDH-1 is composed of 13 different subunits. Subunits NuoA, H, J, K, L, M, N constitute the membrane sector of the complex.

Its subcellular location is the cell inner membrane. It catalyses the reaction a quinone + NADH + 5 H(+)(in) = a quinol + NAD(+) + 4 H(+)(out). Its function is as follows. NDH-1 shuttles electrons from NADH, via FMN and iron-sulfur (Fe-S) centers, to quinones in the respiratory chain. The immediate electron acceptor for the enzyme in this species is believed to be ubiquinone. Couples the redox reaction to proton translocation (for every two electrons transferred, four hydrogen ions are translocated across the cytoplasmic membrane), and thus conserves the redox energy in a proton gradient. The protein is NADH-quinone oxidoreductase subunit K of Photorhabdus laumondii subsp. laumondii (strain DSM 15139 / CIP 105565 / TT01) (Photorhabdus luminescens subsp. laumondii).